Consider the following 180-residue polypeptide: Crossover junction endodeoxyribonuclease RuvC (180 aa).

Catalysis depends on residues D7, E66, and D138. 3 residues coordinate Mg(2+): D7, E66, and D138.

Belongs to the RuvC family. In terms of assembly, homodimer which binds Holliday junction (HJ) DNA. The HJ becomes 2-fold symmetrical on binding to RuvC with unstacked arms; it has a different conformation from HJ DNA in complex with RuvA. In the full resolvosome a probable DNA-RuvA(4)-RuvB(12)-RuvC(2) complex forms which resolves the HJ. The cofactor is Mg(2+).

The protein resides in the cytoplasm. It catalyses the reaction Endonucleolytic cleavage at a junction such as a reciprocal single-stranded crossover between two homologous DNA duplexes (Holliday junction).. In terms of biological role, the RuvA-RuvB-RuvC complex processes Holliday junction (HJ) DNA during genetic recombination and DNA repair. Endonuclease that resolves HJ intermediates. Cleaves cruciform DNA by making single-stranded nicks across the HJ at symmetrical positions within the homologous arms, yielding a 5'-phosphate and a 3'-hydroxyl group; requires a central core of homology in the junction. The consensus cleavage sequence is 5'-(A/T)TT(C/G)-3'. Cleavage occurs on the 3'-side of the TT dinucleotide at the point of strand exchange. HJ branch migration catalyzed by RuvA-RuvB allows RuvC to scan DNA until it finds its consensus sequence, where it cleaves and resolves the cruciform DNA. This chain is Crossover junction endodeoxyribonuclease RuvC, found in Paraburkholderia xenovorans (strain LB400).